Reading from the N-terminus, the 343-residue chain is Tetraacyldisaccharide 4'-kinase (343 aa).

Residue 51–58 (TVGGAGKT) coordinates ATP.

It belongs to the LpxK family.

The enzyme catalyses a lipid A disaccharide + ATP = a lipid IVA + ADP + H(+). It functions in the pathway glycolipid biosynthesis; lipid IV(A) biosynthesis; lipid IV(A) from (3R)-3-hydroxytetradecanoyl-[acyl-carrier-protein] and UDP-N-acetyl-alpha-D-glucosamine: step 6/6. Functionally, transfers the gamma-phosphate of ATP to the 4'-position of a tetraacyldisaccharide 1-phosphate intermediate (termed DS-1-P) to form tetraacyldisaccharide 1,4'-bis-phosphate (lipid IVA). The protein is Tetraacyldisaccharide 4'-kinase of Xanthobacter autotrophicus (strain ATCC BAA-1158 / Py2).